Here is a 123-residue protein sequence, read N- to C-terminus: uncharacterized protein (123 aa).

The first 20 residues, 1 to 20 (MARTLALRASAGLVAGMAMA), serve as a signal peptide directing secretion.

This is an uncharacterized protein from Mycobacterium bovis (strain ATCC BAA-935 / AF2122/97).